The chain runs to 691 residues: Ribonucleoprotein PTB-binding 2 (691 aa).

Over residues 1–30 (MAAAAGDGGGEGGAGLGSAAGLGPGPGLRG) the composition is skewed to gly residues. The disordered stretch occupies residues 1–47 (MAAAAGDGGGEGGAGLGSAAGLGPGPGLRGQGPSAEAHEGAPDPMPA). Residue Ala-2 is modified to N-acetylalanine. RRM domains are found at residues 69–140 (RKIL…LQPT), 142–220 (ALLC…WMDV), and 231–309 (KCLC…FCAP). 2 disordered regions span residues 492 to 522 (PNQHIAGQAGPGHSNTQEKQPATVGMAEGNF) and 543 to 574 (GHHKQQQSQPKGTEISSGAASKNQTSLLGEPP). Residues 548–569 (QQSQPKGTEISSGAASKNQTSL) are compositionally biased toward polar residues.

Interacts with PTBP1 and RAVER1.

The protein resides in the nucleus. It is found in the cytoplasm. May bind single-stranded nucleic acids. The sequence is that of Ribonucleoprotein PTB-binding 2 (RAVER2) from Homo sapiens (Human).